We begin with the raw amino-acid sequence, 239 residues long: Large ribosomal subunit protein uL1 (239 aa).

It belongs to the universal ribosomal protein uL1 family. As to quaternary structure, part of the 50S ribosomal subunit.

Binds directly to 23S rRNA. The L1 stalk is quite mobile in the ribosome, and is involved in E site tRNA release. In terms of biological role, protein L1 is also a translational repressor protein, it controls the translation of the L11 operon by binding to its mRNA. This chain is Large ribosomal subunit protein uL1, found in Rickettsia canadensis (strain McKiel).